A 1477-amino-acid polypeptide reads, in one-letter code: Putative insulin-like peptide receptor (1477 aa).

Residues 1–24 (MMRNVQSFYFLFLLIVLNFHVVLS) form the signal peptide. The Extracellular segment spans residues 25–980 (AVCIGQRATT…LSVTKNNNQL (956 aa)). N-linked (GlcNAc...) asparagine glycosylation is found at Asn-55, Asn-255, Asn-300, Asn-325, Asn-457, Asn-491, Asn-549, Asn-644, Asn-732, Asn-791, Asn-874, Asn-895, and Asn-957. 2 Fibronectin type-III domains span residues 652-750 (EPLG…IKAD) and 780-869 (NKSP…IVQA). A Fibronectin type-III 3 domain is found at 880 to 971 (LDSKMVRVQV…EEIHFKVAEL (92 aa)). A helical membrane pass occupies residues 981-1001 (IIGIISAVSAVIVALLVFILL). The Cytoplasmic portion of the chain corresponds to 1002–1477 (YMFLHRKLEK…EIFYGKPIPV (476 aa)). In terms of domain architecture, Protein kinase spans 1044-1315 (IELIRELGQG…LENEVDDDFV (272 aa)). ATP-binding positions include 1050–1058 (LGQGSFGMV) and Lys-1077. Residue Asp-1175 is the Proton acceptor of the active site. Tyr-1201 is subject to Phosphotyrosine; by autocatalysis. Disordered stretches follow at residues 1350–1376 (YTKG…KSKE) and 1391–1421 (KYDA…SNAC). The segment covering 1356 to 1368 (NMQNMLSRSQNRK) has biased composition (polar residues). The span at 1403 to 1412 (KKKKRPRSKR) shows a compositional bias: basic residues.

It belongs to the protein kinase superfamily. Tyr protein kinase family. Insulin receptor subfamily. Requires Mn(2+) as cofactor. In terms of tissue distribution, expressed in dividing epithelial cells.

It is found in the membrane. It carries out the reaction L-tyrosyl-[protein] + ATP = O-phospho-L-tyrosyl-[protein] + ADP + H(+). Its function is as follows. This receptor probably binds an insulin related protein and has a tyrosine-protein kinase activity. This chain is Putative insulin-like peptide receptor (HTK7), found in Hydra vulgaris (Hydra).